Reading from the N-terminus, the 138-residue chain is Small ribosomal subunit protein uS11 (138 aa).

The segment covering Met-1 to Lys-12 has biased composition (low complexity). 2 disordered regions span residues Met-1–Ile-32 and Ile-119–Val-138. A compositionally biased stretch (basic residues) spans Lys-13 to Lys-22.

Belongs to the universal ribosomal protein uS11 family. Part of the 30S ribosomal subunit. Interacts with proteins S7 and S18. Binds to IF-3.

Located on the platform of the 30S subunit, it bridges several disparate RNA helices of the 16S rRNA. Forms part of the Shine-Dalgarno cleft in the 70S ribosome. The polypeptide is Small ribosomal subunit protein uS11 (Mycolicibacterium smegmatis (strain ATCC 700084 / mc(2)155) (Mycobacterium smegmatis)).